We begin with the raw amino-acid sequence, 205 residues long: Homeobox protein goosecoid-2 (205 aa).

2 disordered regions span residues 33–58 (SLPA…EPGA) and 185–205 (KRAS…KGSC). Residues 126 to 185 (TRRHRTIFSEEQLQALEALFVQNQYPDVSTRERLAGRIRLREERVEVWFKNRRAKWRHQK) constitute a DNA-binding region (homeobox).

The protein belongs to the paired homeobox family. Bicoid subfamily. In terms of tissue distribution, detected in adult testis and pituitary, and in 9-10 week fetal tissue (thorax). Probably expressed in other tissues at low levels.

It localises to the nucleus. Functionally, may have a role in development. May regulate its own transcription. May bind the bicoid consensus sequence TAATCC. The chain is Homeobox protein goosecoid-2 (GSC2) from Homo sapiens (Human).